A 174-amino-acid chain; its full sequence is Peptide deformylase (174 aa).

Residues Cys96 and His138 each contribute to the Fe cation site. Glu139 is a catalytic residue. His142 contacts Fe cation.

This sequence belongs to the polypeptide deformylase family. Fe(2+) is required as a cofactor.

It carries out the reaction N-terminal N-formyl-L-methionyl-[peptide] + H2O = N-terminal L-methionyl-[peptide] + formate. Functionally, removes the formyl group from the N-terminal Met of newly synthesized proteins. Requires at least a dipeptide for an efficient rate of reaction. N-terminal L-methionine is a prerequisite for activity but the enzyme has broad specificity at other positions. The polypeptide is Peptide deformylase (Helicobacter pylori (strain J99 / ATCC 700824) (Campylobacter pylori J99)).